Reading from the N-terminus, the 152-residue chain is Transcriptional repressor NrdR (152 aa).

The segment at 3–34 (CPFCHNEQSRVIDSRVIDSGTSIRRRRECAAC) is a zinc-finger region. The 91-residue stretch at 46 to 136 (LSVVKRNGLA…VYKSFESADD (91 aa)) folds into the ATP-cone domain.

It belongs to the NrdR family. Requires Zn(2+) as cofactor.

Negatively regulates transcription of bacterial ribonucleotide reductase nrd genes and operons by binding to NrdR-boxes. This is Transcriptional repressor NrdR from Corynebacterium aurimucosum (strain ATCC 700975 / DSM 44827 / CIP 107346 / CN-1) (Corynebacterium nigricans).